The following is a 175-amino-acid chain: Apoptosis regulator Bcl-2 homolog (175 aa).

Positions 75-94 (QVLEDKINWGRIITIIAFCA) match the BH1 motif. Residues 105–120 (SPQYYDGIISEAITDA) carry the BH2 motif.

This sequence belongs to the Bcl-2 family. As to quaternary structure, interacts with host BAX; this interaction inhibits BAX oligomerization and subsequent activation. Interacts with host BAK1.

The protein localises to the host mitochondrion. In terms of biological role, plays a role in the inhibition of host apoptosis by sequestering and inactivating multiple proapoptotic BCL-2 proteins, including BAK1 and BAX. The protein is Apoptosis regulator Bcl-2 homolog of Vertebrata (FPV).